Consider the following 170-residue polypeptide: Neurotensin/neuromedin N (170 aa).

The signal sequence occupies residues 1-23 (MMAGMKIQLVCMILLAFSSWSLC).

This sequence belongs to the neurotensin family. As to quaternary structure, interacts with NTSR1. Interacts with SORT1. Interacts with SORL1. In terms of processing, neurotensin is cleaved and degraded by Angiotensin-converting enzyme (ACE) and neprilysin (MME). In terms of tissue distribution, brain and gut.

Its subcellular location is the secreted. It is found in the cytoplasmic vesicle. The protein localises to the secretory vesicle. Functionally, neurotensin may play an endocrine or paracrine role in the regulation of fat metabolism. It causes contraction of smooth muscle. This chain is Neurotensin/neuromedin N (NTS), found in Bos taurus (Bovine).